Reading from the N-terminus, the 449-residue chain is Glucose-6-phosphate isomerase (449 aa).

Glu-290 acts as the Proton donor in catalysis. Catalysis depends on residues His-311 and Lys-425.

Belongs to the GPI family.

The protein resides in the cytoplasm. It catalyses the reaction alpha-D-glucose 6-phosphate = beta-D-fructose 6-phosphate. Its pathway is carbohydrate biosynthesis; gluconeogenesis. It participates in carbohydrate degradation; glycolysis; D-glyceraldehyde 3-phosphate and glycerone phosphate from D-glucose: step 2/4. In terms of biological role, catalyzes the reversible isomerization of glucose-6-phosphate to fructose-6-phosphate. This Exiguobacterium sibiricum (strain DSM 17290 / CCUG 55495 / CIP 109462 / JCM 13490 / 255-15) protein is Glucose-6-phosphate isomerase.